The chain runs to 228 residues: Large ribosomal subunit protein bL25 (228 aa).

The disordered stretch occupies residues 1–24; that stretch reads MATVMELKATARPKSGKGAARAER.

It belongs to the bacterial ribosomal protein bL25 family. CTC subfamily. Part of the 50S ribosomal subunit; part of the 5S rRNA/L5/L18/L25 subcomplex. Contacts the 5S rRNA. Binds to the 5S rRNA independently of L5 and L18.

In terms of biological role, this is one of the proteins that binds to the 5S RNA in the ribosome where it forms part of the central protuberance. The chain is Large ribosomal subunit protein bL25 from Nitrobacter winogradskyi (strain ATCC 25391 / DSM 10237 / CIP 104748 / NCIMB 11846 / Nb-255).